The primary structure comprises 589 residues: Progranulin (589 aa).

The signal sequence occupies residues 1 to 17 (MWVLMSWLAFAAGLVAG). N-linked (GlcNAc...) asparagine glycosylation is present at Asn-38. Disulfide bonds link Cys-125/Cys-138 and Cys-132/Cys-148. Asn-263 carries N-linked (GlcNAc...) asparagine glycosylation. 10 disulfide bridges follow: Cys-282/Cys-294, Cys-288/Cys-304, Cys-295/Cys-312, Cys-305/Cys-319, Cys-313/Cys-326, Cys-320/Cys-333, Cys-364/Cys-376, Cys-370/Cys-386, Cys-395/Cys-408, and Cys-402/Cys-414. N-linked (GlcNAc...) asparagine glycosylation is present at Asn-373. Asn-526 carries an N-linked (GlcNAc...) asparagine glycan.

Belongs to the granulin family. Progranulin is secreted as a homodimer. Interacts with SLPI; interaction protects progranulin from proteolysis. Interacts (via region corresponding to granulin-7 peptide) with CTSD; stabilizes CTSD and increases its proteolytic activity. Interacts (via region corresponding to granulin-7 peptide) with SORT1; this interaction mediates endocytosis and lysosome delivery of progranulin; interaction occurs at the neuronal cell surface in a stressed nervous system. Interacts with PSAP; facilitates lysosomal delivery of progranulin from the extracellular space and the biosynthetic pathway. Forms a complex with PSAP and M6PR; PSAP bridges the binding between progranulin and M6PR. Forms a complex with PSAP and SORT1; progranulin bridges the interaction between PSAP and SORT1; facilitates lysosomal targeting of PSAP via SORT1; interaction enhances PSAP uptake in primary cortical neurons. Interacts (via regions corresponding to granulin-2 and granulin-7 peptides) with GBA1; this interaction prevents aggregation of GBA1-SCARB2 complex via interaction with HSPA1A upon stress. Interacts (via region corresponding to granulin-7 peptide) with HSPA1A; mediates recruitment of HSPA1A to GBA1 and prevents GBA1 aggregation in response to stress. N-glycosylated. Post-translationally, cleaved by ELANE; proteolysis is blocked by SLPI and is concentration- and time-dependent and induces CXCL8/IL-8 production; granulin-3 and granulin-4 are resistant to ELANE. Cleaved by CTSL in lysosome thus regulating the maturation and turnover of progranulin within the lysosome. As to expression, highly expressed at the wound site and diminishes away from the wound. Not expressed in fibroblasts and endothelial cells in intact skin. In adult brain, expressed primarily in neurons and in resting and reactive microglia. Expressed in both neurons and microglia. Highly expressed in activated microglia in response to injury. Expressed in macrophage.

The protein localises to the secreted. It is found in the lysosome. Functionally, secreted protein that acts as a key regulator of lysosomal function and as a growth factor involved in inflammation, wound healing and cell proliferation. Regulates protein trafficking to lysosomes, and also the activity of lysosomal enzymes. Also facilitates the acidification of lysosomes, causing degradation of mature CTSD by CTSB. In addition, functions as a wound-related growth factor that acts directly on dermal fibroblasts and endothelial cells to promote division, migration and the formation of capillary-like tubule structures. Also promotes epithelial cell proliferation by blocking TNF-mediated neutrophil activation preventing release of oxidants and proteases. Moreover, modulates inflammation in neurons by preserving neurons survival, axonal outgrowth and neuronal integrity. In terms of biological role, inhibits epithelial cell proliferation and induces epithelial cells to secrete IL-8. Stabilizes CTSD through interaction with CTSD leading to maintain its aspartic-type peptidase activity. In Mus musculus (Mouse), this protein is Progranulin (Grn).